The following is a 119-amino-acid chain: UPF0342 protein GK0640 (119 aa).

The protein belongs to the UPF0342 family.

The protein is UPF0342 protein GK0640 of Geobacillus kaustophilus (strain HTA426).